The primary structure comprises 747 residues: MERDTCDVLSRSKSASEETLHSCNEEEDPFRGMEPYLVRRLSSRSIQLPPLAFRQLEQADLRSESENIPRPTSLPLKILPLIAVTSADSSGFDVDNGTSAGRSPLDPMTSPGSGLILQANFVHSQRRESFLYRSDSDYDLSPKSMSRNSSIASDIHGDDLIVTPFAQVLASLRTVRNNFAALTNLQDRAPSKRSPMCNQPSINKATITEEAYQKLASETLEELDWCLDQLETLQTRHSVSEMASNKFKRMLNRELTHLSEMSRSGNQVSEYISNTFLDKQHEVEIPSPTQKEKEKKKRPMSQISGVKKLMHSSSLTNSCIPRFGVKTEQEDVLAKELEDVNKWGLHVFRIAELSGNRPLTVIMHTIFQERDLLKTFKIPVDTLITYLMTLEDHYHADVAYHNNIHAADVVQSTHVLLSTPALEAVFTDLEILAAIFASAIHDVDHPGVSNQFLINTNSELALMYNDSSVLENHHLAVGFKLLQEENCDIFQNLTKKQRQSLRKMVIDIVLATDMSKHMNLLADLKTMVETKKVTSSGVLLLDNYSDRIQVLQNMVHCADLSNPTKPLQLYRQWTDRIMEEFFRQGDRERERGMEISPMCDKHNASVEKSQVGFIDYIVHPLWETWADLVHPDAQDILDTLEDNREWYQSTIPQSPSPAPDDQEEGRQGQTEKFQFELTLEEDCESDTEKDSGSQVEEDTSCSDSKTLCTQDSESTEIPLDEQVEEEAVAEEESQPETCVPDDCCPDT.

The disordered stretch occupies residues 1–28 (MERDTCDVLSRSKSASEETLHSCNEEED). Positions 14–24 (SASEETLHSCN) are enriched in basic and acidic residues. S238, S240, S287, and S314 each carry phosphoserine. A disordered region spans residues 282–302 (EVEIPSPTQKEKEKKKRPMSQ). The 330-residue stretch at 325–654 (VKTEQEDVLA…EWYQSTIPQS (330 aa)) folds into the PDEase domain. K326 is covalently cross-linked (Glycyl lysine isopeptide (Lys-Gly) (interchain with G-Cter in SUMO)). The Proton donor role is filled by H401. H401 is a 3',5'-cyclic AMP binding site. AMP is bound at residue H401. H405, H441, D442, and D559 together coordinate Zn(2+). AMP-binding residues include D442, D559, N562, Q610, and F613. Residue D442 participates in Mg(2+) binding. Position 442 (D442) interacts with Mn(2+). 3',5'-cyclic AMP contacts are provided by Q610 and F613. Residues 649–747 (STIPQSPSPA…CVPDDCCPDT (99 aa)) form a disordered region. Polar residues predominate over residues 701-712 (CSDSKTLCTQDS). Positions 718 to 734 (PLDEQVEEEAVAEEESQ) are enriched in acidic residues.

This sequence belongs to the cyclic nucleotide phosphodiesterase family. PDE4 subfamily. As to quaternary structure, homodimer for the long isoforms. Isoforms with truncated N-termini are monomeric. Binds ARRB2. Interacts with PDE4DIP. Identified in a complex composed of RYR1, PDE4D, PKA, FKBP1A and protein phosphatase 1 (PP1). Interacts (via N-terminal region) with SHANK2 (via proline-rich region); the interaction is increased in a PKA-dependent manner. Zn(2+) serves as cofactor. Requires Mg(2+) as cofactor. It depends on Mn(2+) as a cofactor. Sumoylation of long isoforms by PIAS4 augments their activation by PKA phosphorylation and represses their inhibition by ERK phosphorylation. Expressed in brain (at protein level). Isoform 7 is detected in heart, brain, lung, kidney and testis.

The protein localises to the cytoplasm. Its subcellular location is the membrane. The protein resides in the cytoskeleton. It is found in the microtubule organizing center. It localises to the centrosome. The protein localises to the apical cell membrane. The enzyme catalyses 3',5'-cyclic AMP + H2O = AMP + H(+). Its pathway is purine metabolism; 3',5'-cyclic AMP degradation; AMP from 3',5'-cyclic AMP: step 1/1. With respect to regulation, inhibited by rolipram. Activated by phosphatidic acid. Functionally, hydrolyzes the second messenger cAMP, which is a key regulator of many important physiological processes. This Mus musculus (Mouse) protein is 3',5'-cyclic-AMP phosphodiesterase 4D (Pde4d).